The sequence spans 139 residues: Protein archease (139 aa).

Ca(2+) contacts are provided by Asp-12, Asp-138, and Ile-139.

This sequence belongs to the archease family.

Activates the tRNA-splicing ligase complex by facilitating the enzymatic turnover of catalytic subunit RtcB. Acts by promoting the guanylylation of RtcB, a key intermediate step in tRNA ligation. Can also alter the NTP specificity of RtcB such that ATP, dGTP or ITP is used efficiently. The protein is Protein archease of Saccharolobus solfataricus (strain ATCC 35092 / DSM 1617 / JCM 11322 / P2) (Sulfolobus solfataricus).